A 95-amino-acid chain; its full sequence is uncharacterized protein (95 aa).

This is an uncharacterized protein from Saccharomyces cerevisiae (strain ATCC 204508 / S288c) (Baker's yeast).